Here is a 3587-residue protein sequence, read N- to C-terminus: Surfactin synthase subunit 1 (3587 aa).

3 consecutive Carrier domains span residues 971–1046 (APRN…DHRE), 2010–2085 (APRN…ASAE), and 3038–3112 (APTT…ERAE). O-(pantetheine 4'-phosphoryl)serine occurs at positions 1006, 2045, and 3073.

It belongs to the ATP-dependent AMP-binding enzyme family. The cofactor is pantetheine 4'-phosphate.

It participates in antibiotic biosynthesis; surfactin biosynthesis. Functionally, this protein is a multifunctional enzyme able to activate and polymerize the amino acids Leu, Glu, Asp and Val. Activation sites for these AA consist of individual domains. This is Surfactin synthase subunit 1 (srfAA) from Bacillus subtilis (strain 168).